Here is a 285-residue protein sequence, read N- to C-terminus: Protease HtpX homolog (285 aa).

The next 2 helical transmembrane spans lie at 7–27 and 30–50; these read TAML…MIGG and GMTI…WFSD. Histidine 131 serves as a coordination point for Zn(2+). The active site involves glutamate 132. Residue histidine 135 coordinates Zn(2+). Helical transmembrane passes span 146-166 and 177-197; these read ISAT…FFGG and IAGI…QMAI. Residue glutamate 202 participates in Zn(2+) binding.

The protein belongs to the peptidase M48B family. The cofactor is Zn(2+).

It localises to the cell inner membrane. The polypeptide is Protease HtpX homolog (Burkholderia thailandensis (strain ATCC 700388 / DSM 13276 / CCUG 48851 / CIP 106301 / E264)).